Here is a 1017-residue protein sequence, read N- to C-terminus: Rho-GTPase-activating protein LRG1 (1017 aa).

An N-acetylmethionine modification is found at methionine 1. 2 LIM zinc-binding domains span residues 28–88 and 98–148; these read CARC…LCQY and CHVC…CKYH. In terms of domain architecture, LIM zinc-binding 3; truncated spans 155–184; it reads KRCKGCEFPISDQYIEFPKGEEIHCWHPEC. Residues 419–474 form the LIM zinc-binding 4 domain; it reads CAGCNKYIQEECIQFYEHRWHIACFTCSSCHKNINPRSLTDPTFNKEKKKILCSHC. Serine 562 carries the post-translational modification Phosphoserine. Residues 570 to 602 form a disordered region; it reads TDLNDPTKQGDSKNLVIQTDDPSSSQQVSTREN. Over residues 584 to 602 the composition is skewed to polar residues; that stretch reads LVIQTDDPSSSQQVSTREN. The region spanning 730-953 is the Rho-GAP domain; it reads APLDVLCEKW…YLITHNEEMA (224 aa).

As to quaternary structure, interacts with CDC42, RHO1 and RHO2.

Its subcellular location is the cytoplasm. It is found in the bud. The protein localises to the bud neck. Acts in signal transduction. Activates CDC42, RHO1 and RHO2. Negatively regulates 1,3-beta-glucan synthesis. May be responsible for the down-regulation of CDC42 during mating. This is Rho-GTPase-activating protein LRG1 (LRG1) from Saccharomyces cerevisiae (strain ATCC 204508 / S288c) (Baker's yeast).